Consider the following 91-residue polypeptide: PqqA binding protein 1 (91 aa).

The protein belongs to the PqqD family. As to quaternary structure, monomer. Interacts with PqqE.

It participates in cofactor biosynthesis; pyrroloquinoline quinone biosynthesis. Its function is as follows. Functions as a PqqA binding protein and presents PqqA to PqqE, in the pyrroloquinoline quinone (PQQ) biosynthetic pathway. This Pseudomonas putida (strain ATCC 47054 / DSM 6125 / CFBP 8728 / NCIMB 11950 / KT2440) protein is PqqA binding protein 1 (pqqD1).